The following is a 152-amino-acid chain: D-erythrulose-4-phosphate isomerase (152 aa).

Cys67 functions as the Proton acceptor in the catalytic mechanism.

Belongs to the LacAB/RpiB family.

It carries out the reaction D-erythrulose 4-phosphate = D-erythrose 4-phosphate. It participates in carbohydrate metabolism. Its function is as follows. Involved in catabolism of D-apiose. Catalyzes the isomerization of D-erythrulose 4-phosphate to D-erythrose 4-phosphate. The sequence is that of D-erythrulose-4-phosphate isomerase from Pectobacterium atrosepticum (strain SCRI 1043 / ATCC BAA-672) (Erwinia carotovora subsp. atroseptica).